The following is a 1214-amino-acid chain: SWI/SNF complex subunit SMARCC2 (1214 aa).

The interval 1–274 (MAVRKKDGGP…PVSRRKKISA (274 aa)) is marR-like, BRCT and chromo domains module. The 127-residue stretch at 10-136 (PNVKYYEAAD…IEKSLVQNNC (127 aa)) folds into the MarR-like domain. The 44-residue stretch at 140-183 (PNIFLCPEIEPKLLGKLKDIIKRHQGTVTEDKNNASHVVYPVPG) folds into the BRCT; N-terminus domain. Positions 189-217 (EWVRPVMKRDKQVLLHWGYYPDSYDTWIP) constitute a Chromo domain. The region spanning 233–257 (KPRKVHAKWILDTDTFNEWMNEEDY) is the BRCT; C-terminus domain. Residues 257–413 (YEVNDDKNPV…GEQTKNPDLH (157 aa)) form a disordered region. Residues 275 to 284 (KTLTDEVNSP) are compositionally biased toward polar residues. Residues Ser-283, Ser-286, Ser-302, Ser-304, and Ser-306 each carry the phosphoserine modification. Lys-312 is modified (N6-(ADP-ribosyl)lysine). Lys-326 carries the N6-acetyllysine modification. Positions 331-344 (HREEEQEDLTKDMD) are enriched in basic and acidic residues. 2 positions are modified to phosphoserine: Ser-347 and Ser-387. A compositionally biased stretch (acidic residues) spans 379–398 (DLDEQEDESMETTGKDEDEN). Residues 424–521 (IIIPSYAAWF…YQVDAESRPT (98 aa)) form the SWIRM domain. The residue at position 548 (Thr-548) is a Phosphothreonine. Glycyl lysine isopeptide (Lys-Gly) (interchain with G-Cter in SUMO2) cross-links involve residues Lys-564, Lys-566, Lys-568, and Lys-592. Residues 596–647 (SATREWTEQETLLLLEALEMYKDDWNKVSEHVGSRTQDECILHFLRLPIEDP) enclose the SANT domain. Lys-704 participates in a covalent cross-link: Glycyl lysine isopeptide (Lys-Gly) (interchain with G-Cter in SUMO2). Residues 724-852 (KVTGKADPAF…GERKTKVERD (129 aa)) are disordered. Composition is skewed to basic and acidic residues over residues 747–777 (EPERIEESGNDEARVEGQATDEKKEPKEPRE) and 784–852 (EEAK…VERD). Residue Lys-787 forms a Glycyl lysine isopeptide (Lys-Gly) (interchain with G-Cter in SUMO2) linkage. A Phosphoserine modification is found at Ser-813. Lys-848 is covalently cross-linked (Glycyl lysine isopeptide (Lys-Gly) (interchain with G-Cter in SUMO2)). Residues 907 to 934 (EELETIMDREREALEYQRQQLLADRQAF) adopt a coiled-coil conformation. Disordered stretches follow at residues 947–983 (RQQHFQQMHQQQQQPPPALPPGSQPIPPTGAAGPPAV), 997–1092 (PAGS…PPPP), and 1182–1214 (LPSASPLPDPGTPLPPDPTAPSPGTVTPVPPPQ). The span at 949 to 959 (QHFQQMHQQQQ) shows a compositional bias: low complexity. Residues 960–974 (QPPPALPPGSQPIPP) show a composition bias toward pro residues. A compositionally biased stretch (low complexity) spans 997-1033 (PAGSGAPPGSLGPSEQIGQAGSTAGPQQQQPAGAPQP). Composition is skewed to pro residues over residues 1034 to 1051 (GAVPPGVPPPGPHGPSPF) and 1186 to 1202 (SPLPDPGTPLPPDPTAP).

The protein belongs to the SMARCC family. As to quaternary structure, component of the multiprotein chromatin-remodeling complexes SWI/SNF: SWI/SNF-A (BAF), SWI/SNF-B (PBAF) and related complexes. The canonical complex contains a catalytic subunit (either SMARCA4/BRG1/BAF190A or SMARCA2/BRM/BAF190B) and at least SMARCE1, ACTL6A/BAF53, SMARCC1/BAF155, SMARCC2/BAF170, and SMARCB1/SNF5/BAF47. Other subunits specific to each of the complexes may also be present permitting several possible combinations developmentally and tissue specific. Component of the BAF complex, which includes at least actin (ACTB), ARID1A/BAF250A, ARID1B/BAF250B, SMARCA2/BRM, SMARCA4/BRG1, ACTL6A/BAF53, ACTL6B/BAF53B, SMARCE1/BAF57, SMARCC1/BAF155, SMARCC2/BAF170, SMARCB1/SNF5/INI1, and one or more SMARCD1/BAF60A, SMARCD2/BAF60B, or SMARCD3/BAF60C. In muscle cells, the BAF complex also contains DPF3. Component of neural progenitors-specific chromatin remodeling complex (npBAF complex) composed of at least, ARID1A/BAF250A or ARID1B/BAF250B, SMARCD1/BAF60A, SMARCD3/BAF60C, SMARCA2/BRM/BAF190B, SMARCA4/BRG1/BAF190A, SMARCB1/BAF47, SMARCC1/BAF155, SMARCE1/BAF57, SMARCC2/BAF170, PHF10/BAF45A, ACTL6A/BAF53A and actin. Component of neuron-specific chromatin remodeling complex (nBAF complex) composed of at least, ARID1A/BAF250A or ARID1B/BAF250B, SMARCD1/BAF60A, SMARCD3/BAF60C, SMARCA2/BRM/BAF190B, SMARCA4/BRG1/BAF190A, SMARCB1/BAF47, SMARCC1/BAF155, SMARCE1/BAF57, SMARCC2/BAF170, DPF1/BAF45B, DPF3/BAF45C, ACTL6B/BAF53B and actin. Component of the SWI/SNF-B (PBAF) chromatin remodeling complex, at least composed of SMARCA4/BRG1, SMARCB1/BAF47/SNF5, ACTL6A/BAF53A or ACTL6B/BAF53B, SMARCE1/BAF57, SMARCD1/BAF60A, SMARCD2/BAF60B, perhaps SMARCD3/BAF60C, SMARCC1/BAF155, SMARCC2/BAF170, PBRM1/BAF180, ARID2/BAF200 and actin. May also interact with the SIN3A histone deacetylase transcription repressor complex in conjunction with SMARCA2 and SMARCA4. Interacts with SMARD1. Interacts with KDM6B. Interaction with RCOR1. Interacts with DPF2. Interacts with ERCC6. Interacts with FOS. In terms of processing, mono-ADP-ribosylation at Lys-312 by SIRT6 promotes recruitment to the enhancer region of the Heme oxygenase-1 (HO-1) locus, leading to transcription activation of the locus. Ubiquitously expressed.

It is found in the nucleus. Involved in transcriptional activation and repression of select genes by chromatin remodeling (alteration of DNA-nucleosome topology). Component of SWI/SNF chromatin remodeling complexes that carry out key enzymatic activities, changing chromatin structure by altering DNA-histone contacts within a nucleosome in an ATP-dependent manner. Can stimulate the ATPase activity of the catalytic subunit of these complexes. May be required for CoREST dependent repression of neuronal specific gene promoters in non-neuronal cells. Belongs to the neural progenitors-specific chromatin remodeling complex (npBAF complex) and the neuron-specific chromatin remodeling complex (nBAF complex). During neural development a switch from a stem/progenitor to a postmitotic chromatin remodeling mechanism occurs as neurons exit the cell cycle and become committed to their adult state. The transition from proliferating neural stem/progenitor cells to postmitotic neurons requires a switch in subunit composition of the npBAF and nBAF complexes. As neural progenitors exit mitosis and differentiate into neurons, npBAF complexes which contain ACTL6A/BAF53A and PHF10/BAF45A, are exchanged for homologous alternative ACTL6B/BAF53B and DPF1/BAF45B or DPF3/BAF45C subunits in neuron-specific complexes (nBAF). The npBAF complex is essential for the self-renewal/proliferative capacity of the multipotent neural stem cells. The nBAF complex along with CREST plays a role regulating the activity of genes essential for dendrite growth. Critical regulator of myeloid differentiation, controlling granulocytopoiesis and the expression of genes involved in neutrophil granule formation. The protein is SWI/SNF complex subunit SMARCC2 (SMARCC2) of Homo sapiens (Human).